We begin with the raw amino-acid sequence, 253 residues long: Putative tyrosine-protein phosphatase OCA1 (253 aa).

Positions 1–21 are enriched in basic and acidic residues; the sequence is MHRTSIVEELERHQQDQKADQ. The tract at residues 1-84 is disordered; the sequence is MHRTSIVEEL…PRMKTIVKPP (84 aa). The segment covering 27 to 65 has biased composition (polar residues); that stretch reads SDASNSALQESSDPRLSTTDNTNTPEINVNDQQQEQQVA. One can recognise a Tyrosine-protein phosphatase domain in the interval 93–249; the sequence is NFGPVERNLY…IIVYPESAPE (157 aa). Cys-186 acts as the Phosphocysteine intermediate in catalysis.

Belongs to the protein-tyrosine phosphatase family.

The protein resides in the cytoplasm. It carries out the reaction O-phospho-L-tyrosyl-[protein] + H2O = L-tyrosyl-[protein] + phosphate. Functionally, putative tyrosine-protein phosphatase required for protection against superoxide stress. The chain is Putative tyrosine-protein phosphatase OCA1 (OCA1) from Yarrowia lipolytica (strain CLIB 122 / E 150) (Yeast).